A 1121-amino-acid chain; its full sequence is Solute carrier family 38 member 10 (1121 aa).

10 consecutive transmembrane segments (helical) span residues 4-24, 36-58, 84-104, 120-140, 153-173, 229-249, 272-292, 323-343, 345-365, and 378-398; these read AAAS…GVSV, IVLG…MFLV, LVET…YVVI, VGGT…VLPL, FSAM…LSSL, IFAS…FFGY, MLRV…ILPC, ALTL…PNVE, ILGL…PALI, and VVLW…LSVS. Disordered stretches follow at residues 434–691, 731–904, and 965–1068; these read VVAV…EEAG, KEIH…AATG, and ISDG…ELAP. Basic and acidic residues-rich tracts occupy residues 439-454, 466-475, 493-508, and 544-559; these read EDGR…REEL, PGREDGKEAQ, EAHR…KVVV, and DSER…EVGK. A Phosphoserine modification is found at Ser612. Basic and acidic residues-rich tracts occupy residues 645–659, 668–679, 731–752, 763–773, 802–811, and 863–876; these read DSDH…EEKP, EPREQRDVERAG, KEIH…EVHP, EAPEGKARETM, SLEHPERPVG, and PARE…RLAE. A Phosphothreonine modification is found at Thr772. Ser802 carries the post-translational modification Phosphoserine. Ser890 and Ser966 each carry phosphoserine. The segment covering 976–998 has biased composition (basic and acidic residues); the sequence is HRLDHGGYLEMRKEARGGDHMPV. Phosphoserine is present on Ser999. Composition is skewed to basic and acidic residues over residues 1035-1044 and 1057-1068; these read DNAKPNRDLK and DLGPHAEGELAP.

The protein belongs to the amino acid/polyamine transporter 2 family.

The protein resides in the membrane. The catalysed reaction is L-glutamate(out) = L-glutamate(in). The enzyme catalyses L-glutamine(out) = L-glutamine(in). It catalyses the reaction L-alanine(in) = L-alanine(out). It carries out the reaction L-serine(in) = L-serine(out). The catalysed reaction is L-leucine(in) = L-leucine(out). Facilitates bidirectional transport of amino acids. May act as a glutamate sensor that regulates glutamate-glutamine cycle and mTOR signaling in the brain. The transport mechanism remains to be elucidated. The sequence is that of Solute carrier family 38 member 10 from Pongo abelii (Sumatran orangutan).